We begin with the raw amino-acid sequence, 151 residues long: Alpha-latroinsectotoxin-Lh1a (151 aa).

8 ANK repeats span residues T21–A37, I41–I52, V56–D80, N84–L104, K105–K116, Q117–K125, T126–K146, and Y147–R151.

The protein belongs to the cationic peptide 01 (latrotoxin) family. 02 (alpha-latroinsectotoxin) subfamily. In terms of assembly, homotetramer in membranes. In terms of tissue distribution, expressed by the venom gland.

It localises to the secreted. The protein resides in the target cell membrane. Functionally, insecticidal presynaptic neurotoxin that induces massive neurotransmitter release at insect (but not vertebrate) neuromuscular junctions. Native toxin forms cation-permeable pores (with high permeability to calcium) in lipid membranes locust muscle membrane and artificial lipid bilayers. May bind to insect neurexin-1 homolog, insect adhesion G protein-coupled receptor L1 homolog, and insect receptor-type tyrosine-protein phosphatase S homolog, and induces neurotransmitter exocytosis both by forming tetrameric pores in membranes and signaling via G protein-coupled receptor. Oligomerization is a process independent of divalent cations. The toxin forms channels with 0.55-0.58 nm entrance diameter and a relatively small conductance in planar phospholipid membranes. This Latrodectus hasselti (Redback spider) protein is Alpha-latroinsectotoxin-Lh1a.